The sequence spans 150 residues: UPF0208 membrane protein VV1_2222 (150 aa).

Helical transmembrane passes span 42–62 and 70–90; these read FGIK…MAFN and AIVM…WLGH.

The protein belongs to the UPF0208 family.

Its subcellular location is the cell inner membrane. The polypeptide is UPF0208 membrane protein VV1_2222 (Vibrio vulnificus (strain CMCP6)).